The following is a 361-amino-acid chain: PTI1-like tyrosine-protein kinase At3g15890 (361 aa).

The Protein kinase domain occupies 39 to 328 (FNYDNKLGEG…ISELEANPLF (290 aa)). Residues 45 to 53 (LGEGRFGSV) and Lys67 each bind ATP. Asp165 serves as the catalytic Proton acceptor. Disordered regions lie at residues 195–219 (TGDGATKAKSNNGYISPECDASGKE) and 323–361 (EANPLFKNPYSSNENNREHVAEESSDVILEDKDHQQQQE). The span at 351 to 361 (LEDKDHQQQQE) shows a compositional bias: basic and acidic residues.

This sequence belongs to the protein kinase superfamily. Tyr protein kinase family.

It carries out the reaction L-tyrosyl-[protein] + ATP = O-phospho-L-tyrosyl-[protein] + ADP + H(+). This Arabidopsis thaliana (Mouse-ear cress) protein is PTI1-like tyrosine-protein kinase At3g15890.